The primary structure comprises 93 residues: UPF0358 protein YlaN (93 aa).

The protein belongs to the UPF0358 family.

Functionally, essential for cell growth and for normal cell shape. This chain is UPF0358 protein YlaN (ylaN), found in Bacillus subtilis (strain 168).